A 506-amino-acid polypeptide reads, in one-letter code: Zinc finger and SCAN domain containing protein 4D (506 aa).

The 83-residue stretch at 37–119 (SAQLNFSPSN…RFMESLTDEC (83 aa)) folds into the SCAN box domain. The interval 238-264 (SQGNSSHHVDFRSAPTPADVPMEEQPK) is disordered. 4 consecutive C2H2-type zinc fingers follow at residues 395 to 417 (FKCE…QRTH), 424 to 446 (LLCV…EIIH), 452 to 474 (FKCS…EMIH), and 480 to 503 (YVCS…RNYH).

Highly expressed at the 2-cell stage but its expression is rapidly turned off.

Its subcellular location is the nucleus. It is found in the chromosome. The protein localises to the telomere. Transcription factor required to regulate early development. Binds telomeres and plays a key role in genomic stability by regulating telomere elongation. Acts as an activator of spontaneous telomere sister chromatid exchange (T-SCE) and telomere elongation. This chain is Zinc finger and SCAN domain containing protein 4D (Zscan4d), found in Mus musculus (Mouse).